The following is a 141-amino-acid chain: Auxin-responsive protein SAUR63 (141 aa).

The protein belongs to the ARG7 family. In terms of tissue distribution, expressed in hypocotyls, cotyledons, petioles, young rosette leaves, apical portion of inflorescence stems, stamen filaments and petals.

Its subcellular location is the cell membrane. Functionally, may promote auxin-stimulated organ elongation, such as hypocotyls, stamen filaments and petals. This is Auxin-responsive protein SAUR63 from Arabidopsis thaliana (Mouse-ear cress).